We begin with the raw amino-acid sequence, 698 residues long: MOXD1 homolog 1 (698 aa).

A signal peptide spans 1–20 (MSVQDVLWIVLTVQLSFGLA). Asparagine 36, asparagine 140, and asparagine 221 each carry an N-linked (GlcNAc...) asparagine glycan. The 121-residue stretch at 54–174 (GLYWLKWWIN…DTFKVLWSIG (121 aa)) folds into the DOMON domain. Tyrosine 232 is a catalytic residue. Cu cation-binding residues include histidine 265 and histidine 266. A disulfide bridge links cysteine 272 with cysteine 309. Residues histidine 347, histidine 425, and histidine 427 each coordinate Cu cation. 2 cysteine pairs are disulfide-bonded: cysteine 403-cysteine 516 and cysteine 479-cysteine 501. The active site involves histidine 425. The N-linked (GlcNAc...) asparagine glycan is linked to asparagine 465. Methionine 500 contributes to the Cu cation binding site. N-linked (GlcNAc...) asparagine glycosylation is found at asparagine 538 and asparagine 561.

Belongs to the copper type II ascorbate-dependent monooxygenase family. Requires Cu(2+) as cofactor.

The protein localises to the secreted. The sequence is that of MOXD1 homolog 1 from Drosophila melanogaster (Fruit fly).